The chain runs to 104 residues: MYAVVVTGGKQYKVAEGDVLFVEKLTADVDSTVELDNVLLVGKDNGETVVGKPMVEGAKVTAKVLAQGKAKKVVVFKYKPKKDYRKKQGHRQPYTKIQIEKINA.

It belongs to the bacterial ribosomal protein bL21 family. Part of the 50S ribosomal subunit. Contacts protein L20.

In terms of biological role, this protein binds to 23S rRNA in the presence of protein L20. In Clostridium botulinum (strain 657 / Type Ba4), this protein is Large ribosomal subunit protein bL21.